The following is a 334-amino-acid chain: Beta-hexosaminidase (334 aa).

Residues aspartate 60, arginine 68, arginine 133, and 163-164 each bind substrate; that span reads KH. Residue histidine 176 is the Proton donor/acceptor of the active site. Residue aspartate 247 is the Nucleophile of the active site.

The protein belongs to the glycosyl hydrolase 3 family. NagZ subfamily.

It is found in the cytoplasm. It carries out the reaction Hydrolysis of terminal non-reducing N-acetyl-D-hexosamine residues in N-acetyl-beta-D-hexosaminides.. It participates in cell wall biogenesis; peptidoglycan recycling. Plays a role in peptidoglycan recycling by cleaving the terminal beta-1,4-linked N-acetylglucosamine (GlcNAc) from peptide-linked peptidoglycan fragments, giving rise to free GlcNAc, anhydro-N-acetylmuramic acid and anhydro-N-acetylmuramic acid-linked peptides. The protein is Beta-hexosaminidase of Xanthomonas oryzae pv. oryzae (strain MAFF 311018).